Reading from the N-terminus, the 144-residue chain is Transcriptional regulator SlyA (144 aa).

Residues 2–135 enclose the HTH marR-type domain; that stretch reads ESPLGSDLAR…LITLIAKLEH (134 aa). Residues 49 to 72 constitute a DNA-binding region (H-T-H motif); it reads QIQLAKAIGIEQPSLVRTLDQLEE.

Belongs to the SlyA family. Homodimer.

Transcription regulator that can specifically activate or repress expression of target genes. This chain is Transcriptional regulator SlyA, found in Shigella boydii serotype 18 (strain CDC 3083-94 / BS512).